A 497-amino-acid polypeptide reads, in one-letter code: Signal recognition particle receptor FtsY (497 aa).

Disordered stretches follow at residues Met-1–Glu-63 and Ala-79–Ala-130. Over residues Glu-87–Pro-96 the composition is skewed to low complexity. GTP-binding positions include Gly-300 to Thr-307, Asp-382 to Arg-386, and Thr-446 to Asp-449.

Belongs to the GTP-binding SRP family. FtsY subfamily. Part of the signal recognition particle protein translocation system, which is composed of SRP and FtsY. SRP is a ribonucleoprotein composed of Ffh and a 4.5S RNA molecule. Binds to SecY. In terms of processing, proteolytically cleaved. The cleavage may regulate function and subcellular location of FtsY. Full-length FtsY is found primarily associated with the membrane, while cleaved protein is predominantly present in the cytoplasm.

The protein resides in the cell inner membrane. The protein localises to the cytoplasm. It carries out the reaction GTP + H2O = GDP + phosphate + H(+). With respect to regulation, conformation of the Ffh-FtsY complex and regulation of its GTPase activity are modulated by the 4.5S RNA. Formation of the FfH-FtsY complex leads to a mutual stimulation of both GTPases. In terms of biological role, involved in targeting and insertion of nascent membrane proteins into the cytoplasmic membrane. Acts as a receptor for the complex formed by the signal recognition particle (SRP) and the ribosome-nascent chain (RNC). Interaction with SRP-RNC leads to the transfer of the RNC complex to the Sec translocase for insertion into the membrane, the hydrolysis of GTP by both Ffh and FtsY, and the dissociation of the SRP-FtsY complex into the individual components. In Escherichia coli (strain K12), this protein is Signal recognition particle receptor FtsY.